Reading from the N-terminus, the 357-residue chain is Arginine kinase (357 aa).

Ala-2 is subject to N-acetylalanine. The Phosphagen kinase N-terminal domain maps to 9 to 91; it reads KLEEGFKKLQ…FDPIIEDYHK (83 aa). Residue 64-68 coordinates L-arginine; it reads GVGVY. Positions 119-356 constitute a Phosphagen kinase C-terminal domain; that stretch reads FVISTRVRCG…LELIKIEKEM (238 aa). ATP contacts are provided by residues 122 to 126 and His-185; that span reads STRVR. Glu-225 serves as a coordination point for L-arginine. Arg-229 serves as a coordination point for ATP. An L-arginine-binding site is contributed by Cys-271. Residues 280–284 and 309–314 contribute to the ATP site; these read RASVH and RGTRGE. Glu-314 provides a ligand contact to L-arginine.

Belongs to the ATP:guanido phosphotransferase family.

It carries out the reaction L-arginine + ATP = N(omega)-phospho-L-arginine + ADP + H(+). The chain is Arginine kinase from Pachygrapsus marmoratus (Marbled rock crab).